A 297-amino-acid polypeptide reads, in one-letter code: Ribosomal RNA small subunit methyltransferase A (297 aa).

Residues Asn-31, Leu-33, Gly-58, Glu-79, Asp-104, and Asn-129 each coordinate S-adenosyl-L-methionine.

It belongs to the class I-like SAM-binding methyltransferase superfamily. rRNA adenine N(6)-methyltransferase family. RsmA subfamily.

Its subcellular location is the cytoplasm. It carries out the reaction adenosine(1518)/adenosine(1519) in 16S rRNA + 4 S-adenosyl-L-methionine = N(6)-dimethyladenosine(1518)/N(6)-dimethyladenosine(1519) in 16S rRNA + 4 S-adenosyl-L-homocysteine + 4 H(+). Its function is as follows. Specifically dimethylates two adjacent adenosines (A1518 and A1519) in the loop of a conserved hairpin near the 3'-end of 16S rRNA in the 30S particle. May play a critical role in biogenesis of 30S subunits. This Staphylococcus aureus (strain bovine RF122 / ET3-1) protein is Ribosomal RNA small subunit methyltransferase A.